The following is a 643-amino-acid chain: DNA polymerase III subunit tau (643 aa).

An ATP-binding site is contributed by 45-52 (GTRGVGKT). Cysteine 64, cysteine 73, cysteine 76, and cysteine 79 together coordinate Zn(2+). The segment at 385–404 (TPTQVPPQPQSAPQQAPTVP) is disordered.

Belongs to the DnaX/STICHEL family. The DNA polymerase III holoenzyme complex contains at least 10 different subunits organized into 3 functionally essential subassemblies: the Pol III core, the beta sliding clamp processivity factor and the clamp-loading complex. The Pol III core (subunits alpha, epsilon and theta) contains the polymerase and the 3'-5' exonuclease proofreading activities. The polymerase is tethered to the template via the dimeric beta sliding clamp processivity factor. The clamp-loading complex (also called gamma complex) assembles the beta sliding clamp onto the primed template and plays a central role in the organization and communication at the replication fork. The clamp-loading complex contains delta, delta', psi and chi, and 3 copies of either or both of two different DnaX proteins, gamma and tau. The DNA replisome complex has a single clamp loader (3 tau and 1 each of delta, delta', psi and chi subunits) which binds 3 Pol III cores (1 core on the leading strand and 2 on the lagging strand) each with a beta sliding clamp dimer. Additional proteins in the replisome are other copies of gamma, psi and chi, Ssb, DNA helicase and RNA primase. The clamp loader hydrolyzes ATP to assemble the beta processivity factor onto the primed template and plays a central role in the organization and communication at the replication fork; the minimal complex to load the beta sliding clamp on DNA is delta, delta', gamma.

The catalysed reaction is DNA(n) + a 2'-deoxyribonucleoside 5'-triphosphate = DNA(n+1) + diphosphate. Functionally, part of the beta sliding clamp loading complex, which hydrolyzes ATP to load the beta clamp onto primed DNA to form the DNA replication pre-initiation complex. DNA polymerase III is a complex, multichain enzyme responsible for most of the replicative synthesis in bacteria. This DNA polymerase also exhibits 3'-5' exonuclease activity. The gamma complex (gamma(3),delta,delta') is thought to load beta dimers onto DNA by binding ATP which alters the complex's conformation so it can bind beta sliding clamp dimers and open them at one interface. Primed DNA is recognized, ATP is hydrolyzed releasing the gamma complex and closing the beta sliding clamp ring around the primed DNA. Serves as a scaffold to trimerize the core complex. In terms of biological role, interacts with the delta and delta' subunits to transfer the beta subunit on the DNA. Interacts with ATP, drives ATP-induced conformational changes in the gamma complex that opens the beta sliding clamp ring. After loading of primed DNA ATP is hydrolyzed and the beta sliding clamp ring closes. The protein is DNA polymerase III subunit tau (dnaX) of Escherichia coli (strain K12).